The chain runs to 324 residues: [Acyl-carrier-protein] phosphodiesterase PptH (324 aa).

Mn(2+)-binding residues include Asp-22, His-24, and Asp-51. Asp-51, Asn-79, His-205, and His-246 together coordinate Fe cation. His-248 provides a ligand contact to Mn(2+).

Belongs to the metallophosphoesterase superfamily. Fe(3+) serves as cofactor. The cofactor is Mn(2+).

It catalyses the reaction holo-[ACP] + H2O = apo-[ACP] + (R)-4'-phosphopantetheine + H(+). Catalyzes the hydrolysis of the phosphopantetheine group from substrate holo-carrier proteins. This is [Acyl-carrier-protein] phosphodiesterase PptH from Mycobacterium tuberculosis (strain ATCC 25618 / H37Rv).